The following is a 261-amino-acid chain: Cytochrome c oxidase subunit 3 (261 aa).

Topologically, residues 1–15 (MTHQTHAYHMVNPSP) are mitochondrial matrix. The helical transmembrane segment at 16-34 (WPLTGALSALLMTSGLTMW) threads the bilayer. The Mitochondrial intermembrane portion of the chain corresponds to 35 to 40 (FHFNSM). Residues 41–66 (TLLMIGLTTNMLTMYQWWRDVIREST) traverse the membrane as a helical segment. Residues 67–72 (FQGHHT) are Mitochondrial matrix-facing. The helical transmembrane segment at 73–105 (PAVQKGLRYGMILFIISEVLFFTGFFWAFYHSS) threads the bilayer. Residues 106–128 (LAPTPELGGCWPPTGIHPLNPLE) lie on the Mitochondrial intermembrane side of the membrane. A helical transmembrane segment spans residues 129-152 (VPLLNTSVLLASGVSITWAHHSLM). The Mitochondrial matrix portion of the chain corresponds to 153–155 (EGD). Residues 156–183 (RKHMLQALFITITLGVYFTLLQASEYYE) traverse the membrane as a helical segment. Topologically, residues 184–190 (APFTISD) are mitochondrial intermembrane. The helical transmembrane segment at 191 to 223 (GVYGSTFFVATGFHGLHVIIGSTFLIVCFFRQL) threads the bilayer. Topologically, residues 224–232 (KFHFTSNHH) are mitochondrial matrix. The chain crosses the membrane as a helical span at residues 233–256 (FGFEAAAWYWHFVDVVWLFLYVSI). At 257–261 (YWWGS) the chain is on the mitochondrial intermembrane side.

It belongs to the cytochrome c oxidase subunit 3 family. As to quaternary structure, component of the cytochrome c oxidase (complex IV, CIV), a multisubunit enzyme composed of 14 subunits. The complex is composed of a catalytic core of 3 subunits MT-CO1, MT-CO2 and MT-CO3, encoded in the mitochondrial DNA, and 11 supernumerary subunits COX4I1 (or COX4I2), COX5A, COX5B, COX6A2 (or COX6A1), COX6B1 (or COX6B2), COX6C, COX7A1 (or COX7A2), COX7B, COX7C, COX8B and NDUFA4, which are encoded in the nuclear genome. The complex exists as a monomer or a dimer and forms supercomplexes (SCs) in the inner mitochondrial membrane with NADH-ubiquinone oxidoreductase (complex I, CI) and ubiquinol-cytochrome c oxidoreductase (cytochrome b-c1 complex, complex III, CIII), resulting in different assemblies (supercomplex SCI(1)III(2)IV(1) and megacomplex MCI(2)III(2)IV(2)).

It is found in the mitochondrion inner membrane. It catalyses the reaction 4 Fe(II)-[cytochrome c] + O2 + 8 H(+)(in) = 4 Fe(III)-[cytochrome c] + 2 H2O + 4 H(+)(out). Functionally, component of the cytochrome c oxidase, the last enzyme in the mitochondrial electron transport chain which drives oxidative phosphorylation. The respiratory chain contains 3 multisubunit complexes succinate dehydrogenase (complex II, CII), ubiquinol-cytochrome c oxidoreductase (cytochrome b-c1 complex, complex III, CIII) and cytochrome c oxidase (complex IV, CIV), that cooperate to transfer electrons derived from NADH and succinate to molecular oxygen, creating an electrochemical gradient over the inner membrane that drives transmembrane transport and the ATP synthase. Cytochrome c oxidase is the component of the respiratory chain that catalyzes the reduction of oxygen to water. Electrons originating from reduced cytochrome c in the intermembrane space (IMS) are transferred via the dinuclear copper A center (CU(A)) of subunit 2 and heme A of subunit 1 to the active site in subunit 1, a binuclear center (BNC) formed by heme A3 and copper B (CU(B)). The BNC reduces molecular oxygen to 2 water molecules using 4 electrons from cytochrome c in the IMS and 4 protons from the mitochondrial matrix. The sequence is that of Cytochrome c oxidase subunit 3 (MT-CO3) from Bos taurus (Bovine).